A 181-amino-acid polypeptide reads, in one-letter code: ADP-ribosylation factor 2-A (181 aa).

The N-myristoyl glycine moiety is linked to residue Gly2. GTP-binding positions include 24–31, 67–71, and 126–129; these read GLDAAGKT, DVGGQ, and NKQD.

Belongs to the small GTPase superfamily. Arf family.

Its subcellular location is the golgi apparatus. With respect to regulation, activated by AGD10. In terms of biological role, GTP-binding protein involved in protein trafficking; may modulate vesicle budding and uncoating within the Golgi apparatus. The protein is ADP-ribosylation factor 2-A (ARF2-A) of Arabidopsis thaliana (Mouse-ear cress).